The following is a 122-amino-acid chain: Fluoride-specific ion channel FluC 2 (122 aa).

4 helical membrane-spanning segments follow: residues 3–23 (ITAI…RMFI), 38–58 (TSIV…LNLT), 62–82 (LLLL…SFIY), and 93–113 (FMHL…CFYL). Positions 72 and 75 each coordinate Na(+).

This sequence belongs to the fluoride channel Fluc/FEX (TC 1.A.43) family.

It is found in the cell inner membrane. The catalysed reaction is fluoride(in) = fluoride(out). Its activity is regulated as follows. Na(+) is not transported, but it plays an essential structural role and its presence is essential for fluoride channel function. Functionally, fluoride-specific ion channel. Important for reducing fluoride concentration in the cell, thus reducing its toxicity. The polypeptide is Fluoride-specific ion channel FluC 2 (Prochlorococcus marinus (strain MIT 9312)).